The chain runs to 155 residues: uncharacterized protein (155 aa).

The signal sequence occupies residues 1–21 (MFFIVAAGFVIAALIAAIGMA). Positions 35 to 155 (GQTKPATTRP…PVYRPPEEMV (121 aa)) are disordered. The span at 118–128 (ATASNTPQNEA) shows a compositional bias: polar residues.

This is an uncharacterized protein from Schizosaccharomyces pombe (strain 972 / ATCC 24843) (Fission yeast).